Here is a 196-residue protein sequence, read N- to C-terminus: RNA pyrophosphohydrolase (196 aa).

Positions Gly-6 to Lys-149 constitute a Nudix hydrolase domain. The Nudix box signature appears at Gly-38–Gly-59. The segment at Ser-166–Gln-196 is disordered. A compositionally biased stretch (polar residues) spans Arg-167–Lys-184. The segment covering Tyr-185–Gln-196 has biased composition (basic residues).

Belongs to the Nudix hydrolase family. RppH subfamily. A divalent metal cation is required as a cofactor.

In terms of biological role, accelerates the degradation of transcripts by removing pyrophosphate from the 5'-end of triphosphorylated RNA, leading to a more labile monophosphorylated state that can stimulate subsequent ribonuclease cleavage. The polypeptide is RNA pyrophosphohydrolase (Haemophilus influenzae (strain 86-028NP)).